The following is a 110-amino-acid chain: Putative UPF0377 protein YIR040C (110 aa).

The protein belongs to the UPF0377 family.

In Saccharomyces cerevisiae (strain ATCC 204508 / S288c) (Baker's yeast), this protein is Putative UPF0377 protein YIR040C.